The following is a 389-amino-acid chain: GDP-fucose protein O-fucosyltransferase 1 (389 aa).

A signal peptide spans 1–21; that stretch reads MRVSKVLTLASFISVCSYSEA. A glycan (N-linked (GlcNAc...) asparagine) is linked at Asn-24. A disulfide bond links Cys-35 and Cys-37. 40 to 43 serves as a coordination point for substrate; the sequence is RFGN. Cys-119 and Cys-135 are disulfide-bonded. Residue 238–240 participates in substrate binding; it reads HLR. 2 cysteine pairs are disulfide-bonded: Cys-249-Cys-281 and Cys-266-Cys-353. 356–357 contributes to the substrate binding site; it reads TF.

It belongs to the glycosyltransferase 65 family. Monomer.

It is found in the endoplasmic reticulum. It catalyses the reaction L-seryl-[protein] + GDP-beta-L-fucose = 3-O-(alpha-L-fucosyl)-L-seryl-[protein] + GDP + H(+). The catalysed reaction is L-threonyl-[protein] + GDP-beta-L-fucose = 3-O-(alpha-L-fucosyl)-L-threonyl-[protein] + GDP + H(+). It participates in protein modification; protein glycosylation. Its function is as follows. Catalyzes the reaction that attaches fucose through an O-glycosidic linkage to a conserved serine or threonine residue found in the consensus sequence C2-X(4,5)-[S/T]-C3 of EGF domains, where C2 and C3 are the second and third conserved cysteines. Specifically uses GDP-fucose as donor substrate and proper disulfide pairing of the substrate EGF domains is required for fucose transfer. The protein is GDP-fucose protein O-fucosyltransferase 1 of Caenorhabditis elegans.